A 554-amino-acid polypeptide reads, in one-letter code: Glucose-6-phosphate isomerase (554 aa).

E359 acts as the Proton donor in catalysis. Active-site residues include H390 and K518.

It belongs to the GPI family.

Its subcellular location is the cytoplasm. The catalysed reaction is alpha-D-glucose 6-phosphate = beta-D-fructose 6-phosphate. It functions in the pathway carbohydrate biosynthesis; gluconeogenesis. The protein operates within carbohydrate degradation; glycolysis; D-glyceraldehyde 3-phosphate and glycerone phosphate from D-glucose: step 2/4. Functionally, catalyzes the reversible isomerization of glucose-6-phosphate to fructose-6-phosphate. The chain is Glucose-6-phosphate isomerase from Pseudomonas fluorescens (strain SBW25).